We begin with the raw amino-acid sequence, 425 residues long: MAAKWEKLEGNVGVLTIEVDAKEVNNSIDAAFKKVVKTINVPGFRKGKMPRPLFEQRFGIESLYQDALDIILPKAYGEAIDEAGIFPVAHPEIDIEKFEKNANLIFTAKVTVKPEVKLGEYKGLAVEKVETTVTDEDVENELKSLQERQAELVVKEEGTVENGDTAVIDFEGFVDGEAFEGGKGENYSLAIGSGTFIPGFEEQVIGLKSGESKDVEVSFPEEYHAAELAGKPATFKVTVHEIKTKELPELNDEFAKEADEAVATLDELKAKLRTNLEEGKKHEAEHKVRDEVVELAAANAEIDIPEAMIDTELDRMVREFEQRLSQQGMNLELYYQFTGTDADKLKEQMKEDAQKRVRINLVLEAIIEAENIEVTEEEVTAEVEKMAEMYGMPVDAIKQALGSVDALAEDLKVRKAVDFLVENAA.

The region spanning 163-248 is the PPIase FKBP-type domain; sequence GDTAVIDFEG…VHEIKTKELP (86 aa).

The protein belongs to the FKBP-type PPIase family. Tig subfamily.

The protein localises to the cytoplasm. It carries out the reaction [protein]-peptidylproline (omega=180) = [protein]-peptidylproline (omega=0). Its function is as follows. Involved in protein export. Acts as a chaperone by maintaining the newly synthesized protein in an open conformation. Functions as a peptidyl-prolyl cis-trans isomerase. The chain is Trigger factor from Bacillus anthracis (strain A0248).